The primary structure comprises 512 residues: UDP-N-acetylmuramoyl-L-alanyl-D-glutamate--2,6-diaminopimelate ligase (512 aa).

Ser32 serves as a coordination point for UDP-N-acetyl-alpha-D-muramoyl-L-alanyl-D-glutamate. Residue Gly114–Thr120 participates in ATP binding. Residues Thr156 to Thr157, Ser183, and Arg191 each bind UDP-N-acetyl-alpha-D-muramoyl-L-alanyl-D-glutamate. Lys223 bears the N6-carboxylysine mark. Residues Arg395, Asp419–Arg422, Gly469, and Glu473 contribute to the meso-2,6-diaminopimelate site. Positions Asp419–Arg422 match the Meso-diaminopimelate recognition motif motif.

The protein belongs to the MurCDEF family. MurE subfamily. The cofactor is Mg(2+). Carboxylation is probably crucial for Mg(2+) binding and, consequently, for the gamma-phosphate positioning of ATP.

It is found in the cytoplasm. The catalysed reaction is UDP-N-acetyl-alpha-D-muramoyl-L-alanyl-D-glutamate + meso-2,6-diaminopimelate + ATP = UDP-N-acetyl-alpha-D-muramoyl-L-alanyl-gamma-D-glutamyl-meso-2,6-diaminopimelate + ADP + phosphate + H(+). It participates in cell wall biogenesis; peptidoglycan biosynthesis. Catalyzes the addition of meso-diaminopimelic acid to the nucleotide precursor UDP-N-acetylmuramoyl-L-alanyl-D-glutamate (UMAG) in the biosynthesis of bacterial cell-wall peptidoglycan. This Chlorobium phaeobacteroides (strain DSM 266 / SMG 266 / 2430) protein is UDP-N-acetylmuramoyl-L-alanyl-D-glutamate--2,6-diaminopimelate ligase.